The chain runs to 146 residues: Large ribosomal subunit protein bL9 (146 aa).

This sequence belongs to the bacterial ribosomal protein bL9 family.

Binds to the 23S rRNA. This Symbiobacterium thermophilum (strain DSM 24528 / JCM 14929 / IAM 14863 / T) protein is Large ribosomal subunit protein bL9.